The following is a 313-amino-acid chain: Protein-methionine-sulfoxide reductase catalytic subunit MsrP (313 aa).

Residues 1–44 (MARWRPDMAEREATPEALYLRRREFLALGAAGAVGLLVARGARA) constitute a signal peptide (tat-type signal). Mo-molybdopterin-binding positions include N76, 79 to 80 (YE), C134, T169, N217, R222, and 233 to 235 (GAK).

The protein belongs to the MsrP family. In terms of assembly, heterodimer of a catalytic subunit (MsrP) and a heme-binding subunit (MsrQ). Requires Mo-molybdopterin as cofactor. In terms of processing, predicted to be exported by the Tat system. The position of the signal peptide cleavage has not been experimentally proven.

It localises to the periplasm. The enzyme catalyses L-methionyl-[protein] + a quinone + H2O = L-methionyl-(S)-S-oxide-[protein] + a quinol. It carries out the reaction L-methionyl-[protein] + a quinone + H2O = L-methionyl-(R)-S-oxide-[protein] + a quinol. Part of the MsrPQ system that repairs oxidized periplasmic proteins containing methionine sulfoxide residues (Met-O), using respiratory chain electrons. Thus protects these proteins from oxidative-stress damage caused by reactive species of oxygen and chlorine generated by the host defense mechanisms. MsrPQ is essential for the maintenance of envelope integrity under bleach stress, rescuing a wide series of structurally unrelated periplasmic proteins from methionine oxidation. The catalytic subunit MsrP is non-stereospecific, being able to reduce both (R-) and (S-) diastereoisomers of methionine sulfoxide. The protein is Protein-methionine-sulfoxide reductase catalytic subunit MsrP of Anaeromyxobacter sp. (strain K).